A 374-amino-acid polypeptide reads, in one-letter code: MVYSRQKAGMSETGSSFSGAEPFTLAVDGMGGDGGPEVVVAGLAIAADRHPGARVLLIGDEATLRQELARHPKAAAICTIRPANSAIPMDMKPTAALRVRDSSMRLSMDAVAQGEAQGVVSAGNSGAMLALAKIVVKTLPGVSRPAMAAISPTLKGDVVMLDLGANVACDWRNLVEFAVMGEAFAKAVLGLPAPTIGLLNVGSEELKGDEKLRQAADVLRNSSLAAQFHGFVEGHDITAGTTDVVVTDGFTGNVALKTGEGALKMAFVLLRQVFRSGLLAKLGYLLVRPGLERMREWLDPRRYNGAVFVGLNGVVVKSHGGTDAEGFASAVDVAMDMVTHRFNESIREQLSRLDTLAAMRSGAEKEHPAVAAVS.

This sequence belongs to the PlsX family. As to quaternary structure, homodimer. Probably interacts with PlsY.

Its subcellular location is the cytoplasm. The enzyme catalyses a fatty acyl-[ACP] + phosphate = an acyl phosphate + holo-[ACP]. It functions in the pathway lipid metabolism; phospholipid metabolism. In terms of biological role, catalyzes the reversible formation of acyl-phosphate (acyl-PO(4)) from acyl-[acyl-carrier-protein] (acyl-ACP). This enzyme utilizes acyl-ACP as fatty acyl donor, but not acyl-CoA. In Gluconacetobacter diazotrophicus (strain ATCC 49037 / DSM 5601 / CCUG 37298 / CIP 103539 / LMG 7603 / PAl5), this protein is Phosphate acyltransferase.